The sequence spans 39 residues: RapF inhibitor (39 aa).

Residues 1–34 (MKLKSKLLLSCLALSTVFVATTIANAPTHQIEVA) constitute a propeptide that is removed on maturation.

It belongs to the Phr family. As to quaternary structure, interacts with RapF and inhibits its interaction with ComA. Contains a predicted signal peptide cleavage site in the N-terminal region, however the propeptide is probably subject to only one processing event, at the N-terminal end of the mature peptide.

The protein resides in the secreted. It is found in the cytoplasm. In terms of biological role, signaling molecule involved in the regulation of genetic competence development. Secreted during production, but the mature peptide acts intracellularly, indicating that it needs to be imported into the cell to function. Stimulates expression of the genes controlled by ComA, a transcriptional factor that regulates the development of genetic competence. Acts by inhibiting RapF, which regulates the activity of ComA. The chain is RapF inhibitor (phrF) from Bacillus subtilis (strain 168).